A 429-amino-acid chain; its full sequence is Enolase (429 aa).

(2R)-2-phosphoglycerate is bound at residue glutamine 168. Glutamate 210 serves as the catalytic Proton donor. Residues aspartate 247, glutamate 288, and aspartate 315 each contribute to the Mg(2+) site. (2R)-2-phosphoglycerate contacts are provided by lysine 340, arginine 369, serine 370, and lysine 391. The active-site Proton acceptor is lysine 340.

The protein belongs to the enolase family. Mg(2+) is required as a cofactor.

It localises to the cytoplasm. It is found in the secreted. The protein localises to the cell surface. It catalyses the reaction (2R)-2-phosphoglycerate = phosphoenolpyruvate + H2O. The protein operates within carbohydrate degradation; glycolysis; pyruvate from D-glyceraldehyde 3-phosphate: step 4/5. In terms of biological role, catalyzes the reversible conversion of 2-phosphoglycerate (2-PG) into phosphoenolpyruvate (PEP). It is essential for the degradation of carbohydrates via glycolysis. The chain is Enolase from Nostoc punctiforme (strain ATCC 29133 / PCC 73102).